The sequence spans 160 residues: ATP synthase subunit b (160 aa).

Residues 15-35 traverse the membrane as a helical segment; the sequence is LAIVIGVLFWFLRGFLGGILE.

Belongs to the ATPase B chain family. As to quaternary structure, F-type ATPases have 2 components, F(1) - the catalytic core - and F(0) - the membrane proton channel. F(1) has five subunits: alpha(3), beta(3), gamma(1), delta(1), epsilon(1). F(0) has four main subunits: a(1), b(1), b'(1) and c(10-14). The alpha and beta chains form an alternating ring which encloses part of the gamma chain. F(1) is attached to F(0) by a central stalk formed by the gamma and epsilon chains, while a peripheral stalk is formed by the delta, b and b' chains.

The protein localises to the cellular thylakoid membrane. In terms of biological role, f(1)F(0) ATP synthase produces ATP from ADP in the presence of a proton or sodium gradient. F-type ATPases consist of two structural domains, F(1) containing the extramembraneous catalytic core and F(0) containing the membrane proton channel, linked together by a central stalk and a peripheral stalk. During catalysis, ATP synthesis in the catalytic domain of F(1) is coupled via a rotary mechanism of the central stalk subunits to proton translocation. Component of the F(0) channel, it forms part of the peripheral stalk, linking F(1) to F(0). In Synechococcus sp. (strain CC9902), this protein is ATP synthase subunit b.